The primary structure comprises 428 residues: Glutamate-1-semialdehyde 2,1-aminomutase 1 (428 aa).

K267 carries the N6-(pyridoxal phosphate)lysine modification.

This sequence belongs to the class-III pyridoxal-phosphate-dependent aminotransferase family. HemL subfamily. Homodimer. Requires pyridoxal 5'-phosphate as cofactor.

The protein resides in the cytoplasm. It catalyses the reaction (S)-4-amino-5-oxopentanoate = 5-aminolevulinate. It functions in the pathway porphyrin-containing compound metabolism; protoporphyrin-IX biosynthesis; 5-aminolevulinate from L-glutamyl-tRNA(Glu): step 2/2. The protein is Glutamate-1-semialdehyde 2,1-aminomutase 1 of Staphylococcus aureus (strain bovine RF122 / ET3-1).